The following is a 146-amino-acid chain: Probable NADH dehydrogenase [ubiquinone] 1 alpha subcomplex subunit 12 (146 aa).

This sequence belongs to the complex I NDUFA12 subunit family. Complex I is composed of 45 different subunits.

The protein resides in the mitochondrion inner membrane. Functionally, accessory subunit of the mitochondrial membrane respiratory chain NADH dehydrogenase (Complex I), that is believed not to be involved in catalysis. Complex I functions in the transfer of electrons from NADH to the respiratory chain. The immediate electron acceptor for the enzyme is believed to be ubiquinone. The polypeptide is Probable NADH dehydrogenase [ubiquinone] 1 alpha subcomplex subunit 12 (Caenorhabditis elegans).